A 425-amino-acid chain; its full sequence is Serine--tRNA ligase (425 aa).

232-234 is an L-serine binding site; that stretch reads TSE. ATP-binding positions include 263–265 and Val279; that span reads RRE. Glu286 lines the L-serine pocket. ATP is bound at residue 350–353; it reads EAVS. Thr387 provides a ligand contact to L-serine.

Belongs to the class-II aminoacyl-tRNA synthetase family. Type-1 seryl-tRNA synthetase subfamily. As to quaternary structure, homodimer. The tRNA molecule binds across the dimer.

The protein resides in the cytoplasm. It carries out the reaction tRNA(Ser) + L-serine + ATP = L-seryl-tRNA(Ser) + AMP + diphosphate + H(+). It catalyses the reaction tRNA(Sec) + L-serine + ATP = L-seryl-tRNA(Sec) + AMP + diphosphate + H(+). Its pathway is aminoacyl-tRNA biosynthesis; selenocysteinyl-tRNA(Sec) biosynthesis; L-seryl-tRNA(Sec) from L-serine and tRNA(Sec): step 1/1. Functionally, catalyzes the attachment of serine to tRNA(Ser). Is also able to aminoacylate tRNA(Sec) with serine, to form the misacylated tRNA L-seryl-tRNA(Sec), which will be further converted into selenocysteinyl-tRNA(Sec). This Methanoculleus marisnigri (strain ATCC 35101 / DSM 1498 / JR1) protein is Serine--tRNA ligase.